The primary structure comprises 186 residues: ATP synthase subunit delta (186 aa).

The protein belongs to the ATPase delta chain family. As to quaternary structure, F-type ATPases have 2 components, F(1) - the catalytic core - and F(0) - the membrane proton channel. F(1) has five subunits: alpha(3), beta(3), gamma(1), delta(1), epsilon(1). CF(0) has four main subunits: a(1), b(1), b'(1) and c(10-14). The alpha and beta chains form an alternating ring which encloses part of the gamma chain. F(1) is attached to F(0) by a central stalk formed by the gamma and epsilon chains, while a peripheral stalk is formed by the delta, b and b' chains.

It localises to the cell inner membrane. In terms of biological role, f(1)F(0) ATP synthase produces ATP from ADP in the presence of a proton or sodium gradient. F-type ATPases consist of two structural domains, F(1) containing the extramembraneous catalytic core and F(0) containing the membrane proton channel, linked together by a central stalk and a peripheral stalk. During catalysis, ATP synthesis in the catalytic domain of F(1) is coupled via a rotary mechanism of the central stalk subunits to proton translocation. Functionally, this protein is part of the stalk that links CF(0) to CF(1). It either transmits conformational changes from CF(0) to CF(1) or is implicated in proton conduction. In Rhodospirillum rubrum (strain ATCC 11170 / ATH 1.1.1 / DSM 467 / LMG 4362 / NCIMB 8255 / S1), this protein is ATP synthase subunit delta.